The chain runs to 451 residues: uncharacterized protein (451 aa).

11 helical membrane passes run 13 to 33 (IGFV…WKFP), 41 to 61 (GGAF…PLLV), 97 to 117 (ACFL…LYIV), 142 to 162 (NPVQ…LVVA), 174 to 194 (AVMM…SLTL), 217 to 237 (ILFA…VMVT), 255 to 275 (IVLM…PAVF), 299 to 319 (LPFG…AALT), 345 to 365 (WTSG…YGVL), 381 to 401 (FTVS…FIPL), and 429 to 449 (LLRF…IGIL).

The protein belongs to the sodium:neurotransmitter symporter (SNF) (TC 2.A.22) family.

Its subcellular location is the cell membrane. Functionally, putative sodium-dependent transporter. This is an uncharacterized protein from Bacillus subtilis (strain 168).